Here is a 183-residue protein sequence, read N- to C-terminus: Peptide deformylase (183 aa).

C111 and H154 together coordinate Fe cation. E155 is a catalytic residue. H158 lines the Fe cation pocket.

Fe(2+) is required as a cofactor.

It catalyses the reaction N-terminal N-formyl-L-methionyl-[peptide] + H2O = N-terminal L-methionyl-[peptide] + formate. In terms of biological role, removes the formyl group from the N-terminal Met of newly synthesized proteins. Requires at least a dipeptide for an efficient rate of reaction. N-terminal L-methionine is a prerequisite for activity but the enzyme has broad specificity at other positions. The polypeptide is Peptide deformylase (Staphylococcus aureus).